Reading from the N-terminus, the 332-residue chain is L-lactate dehydrogenase C chain (332 aa).

Position 2 is a blocked amino end (Ser) (Ser2). NAD(+) is bound by residues 29-57 and Arg99; that span reads GNVGMACAISILLKGLADELALVDADTNK. Substrate is bound by residues Arg106, Asn138, and Arg169. Asn138 provides a ligand contact to NAD(+). His193 (proton acceptor) is an active-site residue. Position 248 (Thr248) interacts with substrate.

It belongs to the LDH/MDH superfamily. LDH family. As to quaternary structure, homotetramer. Interacts with RABL2/RABL2A; binds preferentially to GTP-bound RABL2. As to expression, expressed within the midpiece of sperm tail (at protein level).

It localises to the cytoplasm. It catalyses the reaction (S)-lactate + NAD(+) = pyruvate + NADH + H(+). The protein operates within fermentation; pyruvate fermentation to lactate; (S)-lactate from pyruvate: step 1/1. Its function is as follows. Possible role in sperm motility. The polypeptide is L-lactate dehydrogenase C chain (Ldhc) (Mus musculus (Mouse)).